Here is a 346-residue protein sequence, read N- to C-terminus: Ribonucleoside-diphosphate reductase subunit beta (346 aa).

Residues Glu89, Glu120, and His123 each coordinate Fe cation. Tyr129 is an active-site residue. Residues Glu193, Glu227, and His230 each coordinate Fe cation.

The protein belongs to the ribonucleoside diphosphate reductase small chain family. As to quaternary structure, tetramer of two alpha and two beta subunits. Requires Fe cation as cofactor.

The enzyme catalyses a 2'-deoxyribonucleoside 5'-diphosphate + [thioredoxin]-disulfide + H2O = a ribonucleoside 5'-diphosphate + [thioredoxin]-dithiol. Functionally, provides the precursors necessary for DNA synthesis. Catalyzes the biosynthesis of deoxyribonucleotides from the corresponding ribonucleotides. In Chlamydia muridarum (strain MoPn / Nigg), this protein is Ribonucleoside-diphosphate reductase subunit beta (nrdB).